We begin with the raw amino-acid sequence, 185 residues long: ATP synthase subunit b 1 (185 aa).

A helical membrane pass occupies residues 4 to 24; sequence TLAIALTLATTSPAFAAGGGW.

This sequence belongs to the ATPase B chain family. As to quaternary structure, F-type ATPases have 2 components, F(1) - the catalytic core - and F(0) - the membrane proton channel. F(1) has five subunits: alpha(3), beta(3), gamma(1), delta(1), epsilon(1). F(0) has three main subunits: a(1), b(2) and c(10-14). The alpha and beta chains form an alternating ring which encloses part of the gamma chain. F(1) is attached to F(0) by a central stalk formed by the gamma and epsilon chains, while a peripheral stalk is formed by the delta and b chains.

It is found in the cell inner membrane. F(1)F(0) ATP synthase produces ATP from ADP in the presence of a proton or sodium gradient. F-type ATPases consist of two structural domains, F(1) containing the extramembraneous catalytic core and F(0) containing the membrane proton channel, linked together by a central stalk and a peripheral stalk. During catalysis, ATP synthesis in the catalytic domain of F(1) is coupled via a rotary mechanism of the central stalk subunits to proton translocation. Functionally, component of the F(0) channel, it forms part of the peripheral stalk, linking F(1) to F(0). In Ruegeria sp. (strain TM1040) (Silicibacter sp.), this protein is ATP synthase subunit b 1.